The sequence spans 464 residues: tRNA-2-methylthio-N(6)-dimethylallyladenosine synthase (464 aa).

The interval 1 to 24 (MSDLVPLSRKPAPAAGGPAPSPAA) is disordered. A compositionally biased stretch (low complexity) spans 8–18 (SRKPAPAAGGP). The MTTase N-terminal domain occupies 27-142 (RKVYVHTFGC…LPEMVERARD (116 aa)). Residues C36, C72, C105, C180, C184, and C187 each coordinate [4Fe-4S] cluster. A Radical SAM core domain is found at 166-398 (ARGRVTAFVT…LAAQRRIAGE (233 aa)). One can recognise a TRAM domain in the interval 401–464 (AGELGKVVEV…GGSSLSGTLA (64 aa)).

It belongs to the methylthiotransferase family. MiaB subfamily. Monomer. Requires [4Fe-4S] cluster as cofactor.

It localises to the cytoplasm. The catalysed reaction is N(6)-dimethylallyladenosine(37) in tRNA + (sulfur carrier)-SH + AH2 + 2 S-adenosyl-L-methionine = 2-methylsulfanyl-N(6)-dimethylallyladenosine(37) in tRNA + (sulfur carrier)-H + 5'-deoxyadenosine + L-methionine + A + S-adenosyl-L-homocysteine + 2 H(+). In terms of biological role, catalyzes the methylthiolation of N6-(dimethylallyl)adenosine (i(6)A), leading to the formation of 2-methylthio-N6-(dimethylallyl)adenosine (ms(2)i(6)A) at position 37 in tRNAs that read codons beginning with uridine. This is tRNA-2-methylthio-N(6)-dimethylallyladenosine synthase from Anaeromyxobacter sp. (strain K).